The primary structure comprises 619 residues: ATP-dependent RNA helicase abstrakt (619 aa).

Over residues 1–11 (MAHVKRYRRSS) the composition is skewed to basic residues. Disordered stretches follow at residues 1–25 (MAHVKRYRRSSKSSEEGDLDNEDYV) and 50–69 (ETAQPKSSSENENEDDSQGA). Phosphoserine occurs at positions 11, 13, 14, 56, 57, 58, and 66. The short motif at 177 to 205 (RSFREMKFPKGILNGLAAKGIKNPTPIQV) is the Q motif element. Residues 208–392 (LPTVLAGRDL…RSALVKPVTI (185 aa)) form the Helicase ATP-binding domain. 221 to 228 (AFTGSGKT) contacts ATP. A DEAD box motif is present at residues 340–343 (DEAD). One can recognise a Helicase C-terminal domain in the interval 403 to 563 (NVTQQVEYVK…EVPDFLDELA (161 aa)). Residues 577–594 (HGCTYCGGLGHRITECPK) form a CCHC-type zinc finger.

The protein belongs to the DEAD box helicase family. DDX41 subfamily.

It is found in the nucleus. It catalyses the reaction ATP + H2O = ADP + phosphate + H(+). In terms of biological role, ATP-dependent RNA helicase. Is essential for the directed and fasciculated early outgrowth of the bolwig nerves, as well as for its navigation at later stages. Is required during post-transcriptional gene expression. Plays a role during morphogenetic process, apoptosis and the establishment of cell polarity. The protein is ATP-dependent RNA helicase abstrakt (abs) of Drosophila melanogaster (Fruit fly).